We begin with the raw amino-acid sequence, 283 residues long: Pantothenate synthetase (283 aa).

30–37 (MGYLHEGH) serves as a coordination point for ATP. The Proton donor role is filled by H37. Residue Q61 coordinates (R)-pantoate. Q61 contacts beta-alanine. 147 to 150 (GQKD) is a binding site for ATP. Q153 is a (R)-pantoate binding site. ATP contacts are provided by residues V176 and 184–187 (MSSR).

Belongs to the pantothenate synthetase family. Homodimer.

The protein resides in the cytoplasm. The catalysed reaction is (R)-pantoate + beta-alanine + ATP = (R)-pantothenate + AMP + diphosphate + H(+). It functions in the pathway cofactor biosynthesis; (R)-pantothenate biosynthesis; (R)-pantothenate from (R)-pantoate and beta-alanine: step 1/1. In terms of biological role, catalyzes the condensation of pantoate with beta-alanine in an ATP-dependent reaction via a pantoyl-adenylate intermediate. The protein is Pantothenate synthetase of Thermoanaerobacter sp. (strain X514).